Here is a 219-residue protein sequence, read N- to C-terminus: MLNLKQIEFCLDKIGDMFPHAECELVHSNPFELVVAVALSAQCTDALVNRVTKTLFQKYKRPEDYLAVPLEELQQDIKSIGLYRNKAKNIQKLSKMIIEDYGGEVPRDRDELVKLPGVGRKTANVVVSVAFGVPAIAVDTHVERVSKRLGICRWKDSVLEVEKTLMRKVPKEDWSVTHHRLIFFGRYHCKAQSPRCAECPLLSLCREGQKRDKKGLVKR.

Residues 109 to 128 form the HhH domain; that stretch reads RDELVKLPGVGRKTANVVVS. The [4Fe-4S] cluster site is built by Cys-189, Cys-196, Cys-199, and Cys-205.

This sequence belongs to the Nth/MutY family. The cofactor is [4Fe-4S] cluster.

It catalyses the reaction 2'-deoxyribonucleotide-(2'-deoxyribose 5'-phosphate)-2'-deoxyribonucleotide-DNA = a 3'-end 2'-deoxyribonucleotide-(2,3-dehydro-2,3-deoxyribose 5'-phosphate)-DNA + a 5'-end 5'-phospho-2'-deoxyribonucleoside-DNA + H(+). Its function is as follows. DNA repair enzyme that has both DNA N-glycosylase activity and AP-lyase activity. The DNA N-glycosylase activity releases various damaged pyrimidines from DNA by cleaving the N-glycosidic bond, leaving an AP (apurinic/apyrimidinic) site. The AP-lyase activity cleaves the phosphodiester bond 3' to the AP site by a beta-elimination, leaving a 3'-terminal unsaturated sugar and a product with a terminal 5'-phosphate. The polypeptide is Endonuclease III (Bacillus subtilis (strain 168)).